Consider the following 154-residue polypeptide: Cytochrome c-type biogenesis protein CcmE (154 aa).

The Cytoplasmic segment spans residues 1-8; that stretch reads MHPQRKQR. A helical; Signal-anchor for type II membrane protein membrane pass occupies residues 9–29; it reads LMIVLFIVVFSSLAVGLIAYA. Over 30 to 154 the chain is Periplasmic; sequence LRENINLFYP…ATCGGLNYGA (125 aa). The heme site is built by His124 and Tyr128.

This sequence belongs to the CcmE/CycJ family.

It localises to the cell inner membrane. Functionally, heme chaperone required for the biogenesis of c-type cytochromes. Transiently binds heme delivered by CcmC and transfers the heme to apo-cytochromes in a process facilitated by CcmF and CcmH. The protein is Cytochrome c-type biogenesis protein CcmE of Cellvibrio japonicus (strain Ueda107) (Pseudomonas fluorescens subsp. cellulosa).